The primary structure comprises 441 residues: Ribosomal protein uS12 methylthiotransferase RimO (441 aa).

The MTTase N-terminal domain occupies 8-118 (PKIGFVSLGC…VLQHVHHYVP (111 aa)). [4Fe-4S] cluster contacts are provided by Cys-17, Cys-53, Cys-82, Cys-150, Cys-154, and Cys-157. Positions 136–373 (LTPRHYAYLK…MQLQQQISAE (238 aa)) constitute a Radical SAM core domain. Residues 376–441 (QEKVGREILV…DEYDLWGSRV (66 aa)) form the TRAM domain.

It belongs to the methylthiotransferase family. RimO subfamily. [4Fe-4S] cluster is required as a cofactor.

It is found in the cytoplasm. The enzyme catalyses L-aspartate(89)-[ribosomal protein uS12]-hydrogen + (sulfur carrier)-SH + AH2 + 2 S-adenosyl-L-methionine = 3-methylsulfanyl-L-aspartate(89)-[ribosomal protein uS12]-hydrogen + (sulfur carrier)-H + 5'-deoxyadenosine + L-methionine + A + S-adenosyl-L-homocysteine + 2 H(+). In terms of biological role, catalyzes the methylthiolation of an aspartic acid residue of ribosomal protein uS12. The sequence is that of Ribosomal protein uS12 methylthiotransferase RimO from Salmonella paratyphi B (strain ATCC BAA-1250 / SPB7).